The primary structure comprises 135 residues: Ribonuclease VapC26 (135 aa).

Residues 1 to 118 (MIIDTSALLA…TRTILTLDRR (118 aa)) enclose the PINc domain. Mg(2+)-binding residues include aspartate 4 and aspartate 97.

Belongs to the PINc/VapC protein family. Mg(2+) serves as cofactor.

Its function is as follows. Toxic component of a type II toxin-antitoxin (TA) system. An RNase. Upon expression in M.smegmatis inhibits colony formation. Its toxic effect is neutralized by coexpression with cognate antitoxin VapB26. This chain is Ribonuclease VapC26, found in Mycobacterium tuberculosis (strain ATCC 25618 / H37Rv).